Here is an 882-residue protein sequence, read N- to C-terminus: Alanine--tRNA ligase (882 aa).

Positions 568, 572, 670, and 674 each coordinate Zn(2+).

This sequence belongs to the class-II aminoacyl-tRNA synthetase family. Zn(2+) serves as cofactor.

Its subcellular location is the cytoplasm. It catalyses the reaction tRNA(Ala) + L-alanine + ATP = L-alanyl-tRNA(Ala) + AMP + diphosphate. Catalyzes the attachment of alanine to tRNA(Ala) in a two-step reaction: alanine is first activated by ATP to form Ala-AMP and then transferred to the acceptor end of tRNA(Ala). Also edits incorrectly charged Ser-tRNA(Ala) and Gly-tRNA(Ala) via its editing domain. This is Alanine--tRNA ligase from Lactobacillus johnsonii (strain CNCM I-12250 / La1 / NCC 533).